Reading from the N-terminus, the 777-residue chain is 1,4-alpha-glucan branching enzyme GlgB (777 aa).

The active-site Nucleophile is Asp408. The active-site Proton donor is Glu461.

It belongs to the glycosyl hydrolase 13 family. GlgB subfamily. Monomer.

The catalysed reaction is Transfers a segment of a (1-&gt;4)-alpha-D-glucan chain to a primary hydroxy group in a similar glucan chain.. It functions in the pathway glycan biosynthesis; glycogen biosynthesis. Functionally, catalyzes the formation of the alpha-1,6-glucosidic linkages in glycogen by scission of a 1,4-alpha-linked oligosaccharide from growing alpha-1,4-glucan chains and the subsequent attachment of the oligosaccharide to the alpha-1,6 position. This is 1,4-alpha-glucan branching enzyme GlgB from Actinobacillus pleuropneumoniae serotype 3 (strain JL03).